A 370-amino-acid polypeptide reads, in one-letter code: MAAPSEAPERRRPFGRRFLTDPTRLFQHNAWDNVEWSEEQEATAKSKVQENSSQLLPQDKQEEYEVNAKRYWDDFYKIHENGFFKDRHWLFTEFPELAPNRNPSQNEDSLCEFSCKEVSKNEGLGSCENGHCTLENRAENQLNLLKSSPRFCTEELAPQKLKQSYEDYPGSSASYRILEVGCGAGNTVFPILQTNNDPGLFVYCCDFSTTAVDLVQSNVEYDSSRCFAFVHDLCNDQSPFPMPDESLDIVILIFVLSAILPEKMQCVINKLSRLLKPGGMILLRDYGRYDLAQLRFKKGQCLSANFYVRGDGTRVYFFTQDELDDLFTRAGLQKIQNLVDRRLQVNRGKQMTMYRVWIQCKYQKPAGPQL.

Positions 72, 76, 181, 206, 232, 233, and 253 each coordinate S-adenosyl-L-methionine.

This sequence belongs to the methyltransferase superfamily. METL family. In terms of assembly, monomer.

It localises to the cytoplasm. It carries out the reaction cytidine(32) in tRNA(Thr) + S-adenosyl-L-methionine = N(3)-methylcytidine(32) in tRNA(Thr) + S-adenosyl-L-homocysteine + H(+). The catalysed reaction is cytidine(32) in tRNA(Arg)(CCU) + S-adenosyl-L-methionine = N(3)-methylcytidine(32) in tRNA(Arg)(CCU) + S-adenosyl-L-homocysteine + H(+). Its function is as follows. S-adenosyl-L-methionine-dependent methyltransferase that mediates N(3)-methylcytidine modification of residue 32 of the tRNA anticodon loop of tRNA(Thr)(UGU) and tRNA(Arg)(CCU). N(3)-methylcytidine methylation by METTL2 requires the N6-threonylcarbamoylation of tRNA (t6A37) by the EKC/KEOPS complex as prerequisite. This Gallus gallus (Chicken) protein is tRNA N(3)-cytidine methyltransferase METTL2 (METTL2).